Consider the following 70-residue polypeptide: Fumarase D (70 aa).

The protein belongs to the FumD family.

The enzyme catalyses (S)-malate = fumarate + H2O. Functionally, in vitro catalyzes the addition of water to fumarate, forming malate. Cannot catalyze the reverse reaction. Cannot use the cis-isomer maleate as substrate. This is Fumarase D from Salmonella typhi.